An 81-amino-acid chain; its full sequence is ATP synthase subunit c (81 aa).

2 helical membrane-spanning segments follow: residues 4–24 (MIAQGALIGGGLIMAGGAIGA) and 57–77 (VGLVEAAYFINLAFMALFVFA).

The protein belongs to the ATPase C chain family. As to quaternary structure, F-type ATPases have 2 components, F(1) - the catalytic core - and F(0) - the membrane proton channel. F(1) has five subunits: alpha(3), beta(3), gamma(1), delta(1), epsilon(1). F(0) has three main subunits: a(1), b(2) and c(10-14). The alpha and beta chains form an alternating ring which encloses part of the gamma chain. F(1) is attached to F(0) by a central stalk formed by the gamma and epsilon chains, while a peripheral stalk is formed by the delta and b chains.

It is found in the cell membrane. Its function is as follows. F(1)F(0) ATP synthase produces ATP from ADP in the presence of a proton or sodium gradient. F-type ATPases consist of two structural domains, F(1) containing the extramembraneous catalytic core and F(0) containing the membrane proton channel, linked together by a central stalk and a peripheral stalk. During catalysis, ATP synthesis in the catalytic domain of F(1) is coupled via a rotary mechanism of the central stalk subunits to proton translocation. In terms of biological role, key component of the F(0) channel; it plays a direct role in translocation across the membrane. A homomeric c-ring of between 10-14 subunits forms the central stalk rotor element with the F(1) delta and epsilon subunits. The chain is ATP synthase subunit c from Mycobacterium leprae (strain TN).